The following is a 104-amino-acid chain: N(4)-acetylcytidine amidohydrolase (104 aa).

The ASCH domain maps to 7 to 104 (TFFTRFEQDI…FWVIAFELVD (98 aa)). Catalysis depends on Lys21, which acts as the Proton acceptor. Residue Thr24 is the Nucleophile of the active site. Glu74 acts as the Proton donor in catalysis.

This sequence belongs to the N(4)-acetylcytidine amidohydrolase family.

The catalysed reaction is N(4)-acetylcytidine + H2O = cytidine + acetate + H(+). It carries out the reaction N(4)-acetyl-2'-deoxycytidine + H2O = 2'-deoxycytidine + acetate + H(+). The enzyme catalyses N(4)-acetylcytosine + H2O = cytosine + acetate + H(+). Its function is as follows. Catalyzes the hydrolysis of N(4)-acetylcytidine (ac4C). The chain is N(4)-acetylcytidine amidohydrolase from Pasteurella multocida (strain Pm70).